The sequence spans 508 residues: MGGLTLFAAQGCKAPKQVAEQAEHPNIIYVFPDQYRNQAMGFWNQEGFRDKVNFRGDPVHTPNIDTFARESMVLTSAQSNCPLSSPHRGMLLTGMYPNRSGVPLNCNSTRPISSLRDDAECIGDVFSKAGYDCAYFGKLHADFPTPNDPENPGQYVETQRPVWDAYTPKEQRHGFNYWYSYGTFDEHKNPHYWDTDGKRHDPKEWSPLHESGKVVSYLKNEGNVRDTKKPFFIMVGMNPPHSPYRSLNDCEEQDFNLYKDQPLDSLLIRPNVDLNMKKAESVRYYFASVTGVDRAFGQILEALKQLGLDKNTVVIFASDHGETMCSQRTDDPKNSPYSESMNIPFLVRFPGKIQPRVDDLLLSAPDIMPTVLGLCGLGDSIPSEVQGRNFAPLFFDEKAEIVRPAGALYIQNLDGEKDKDGLVQSYFPSSRGIKTARYTLALYIDRKTKQLKKSLLFDDVNDPYQLNNLPLDENKEVVEQLYREMGTMLKEIDDPWYTEKILSDRIPY.

Residue S84 is modified to 3-oxoalanine (Ser).

The protein belongs to the sulfatase family. Post-translationally, the conversion to 3-oxoalanine (also known as C-formylglycine, FGly), of a serine or cysteine residue in prokaryotes and of a cysteine residue in eukaryotes, is critical for catalytic activity.

Its function is as follows. Endosulfatase involved in the degradation of the glycosaminoglycans (GAGs) chondroitin sulfate (CS) and dermatan sulfate (DS). Efficiently hydrolyzes sulfate groups from a broad range of substrate size, including disaccharide to high molecular weight CS and DS polymers. Has a strict specificity for the 4-O-sulfate groups of galactosamine. GAG-specific sulfatases play a key role in the persistence of the major human gut symbiont B.thetaiotaomicron in the host gastrointestinal tract. In Bacteroides thetaiotaomicron (strain ATCC 29148 / DSM 2079 / JCM 5827 / CCUG 10774 / NCTC 10582 / VPI-5482 / E50), this protein is Endo-4-O-sulfatase.